The primary structure comprises 313 residues: 2-phosphoglycerate kinase (313 aa).

In terms of domain architecture, ATP-cone spans 8–95 (NKILVKDKDY…LWRRVLKKHS (88 aa)).

Belongs to the 2-phosphoglycerate kinase family. A divalent metal cation serves as cofactor.

The enzyme catalyses (2R)-2-phosphoglycerate + ATP = (2R)-2,3-bisphosphoglycerate + ADP + H(+). The protein operates within thermoadapter biosynthesis; cyclic 2,3-diphosphoglycerate biosynthesis; cyclic 2,3-diphosphoglycerate from 2-phospho-D-glycerate: step 1/2. Catalyzes the phosphorylation of 2-phosphoglycerate to 2,3-diphosphoglycerate. Involved in the biosynthesis of cyclic 2,3-bisphosphoglycerate, a thermoprotectant. This Methanococcus vannielii (strain ATCC 35089 / DSM 1224 / JCM 13029 / OCM 148 / SB) protein is 2-phosphoglycerate kinase.